A 151-amino-acid chain; its full sequence is Nucleoside diphosphate kinase (151 aa).

K10, F58, R86, T92, R103, and N113 together coordinate ATP. Residue H116 is the Pros-phosphohistidine intermediate of the active site.

Belongs to the NDK family. As to quaternary structure, homotetramer. Mg(2+) is required as a cofactor.

It is found in the cytoplasm. It catalyses the reaction dZDP + ATP = dZTP + ADP. The catalysed reaction is a 2'-deoxyribonucleoside 5'-diphosphate + ATP = a 2'-deoxyribonucleoside 5'-triphosphate + ADP. The enzyme catalyses a ribonucleoside 5'-diphosphate + ATP = a ribonucleoside 5'-triphosphate + ADP. It functions in the pathway purine metabolism. Major role in the synthesis of nucleoside triphosphates other than ATP. The ATP gamma phosphate is transferred to the NDP beta phosphate via a ping-pong mechanism, using a phosphorylated active-site intermediate. In terms of biological role, (Microbial infection) Catalyzes the phosphorylation of dZDP to dZTP, when the bacterium is infected by a phage that produces the substrate for the synthesis of dZTP (2- amino-2'-deoxyadenosine 5'-triphosphate), which is then used by the phage as a DNA polymerase substrate. This Synechococcus sp. (strain CC9605) protein is Nucleoside diphosphate kinase.